The sequence spans 245 residues: MYRYKITIEYLGTHFAGWQRQAGVLSVQQILEEAIYKFSSEQVTLFGSGRTDAGVHAIGQVAHFDLSKYLEPYKIIKAINYFVRPYDVGVWNCELVSNNFHARFSAISRHYIYRIINRTYPSVIDFNRAWWISSPLDILAMQKAAAYLLGKHDFTSFRSSSCQSKSPIKTLTEINIIKEYEEIKLYISAPSFLHYMVRNIVGSLVLVGKNIWQAEQIKNVLDARDRKIAGPTAPAFGLYFIKAEY.

The active-site Nucleophile is the aspartate 52. A substrate-binding site is contributed by tyrosine 111.

Belongs to the tRNA pseudouridine synthase TruA family. As to quaternary structure, homodimer.

The enzyme catalyses uridine(38/39/40) in tRNA = pseudouridine(38/39/40) in tRNA. Functionally, formation of pseudouridine at positions 38, 39 and 40 in the anticodon stem and loop of transfer RNAs. In Rickettsia prowazekii (strain Madrid E), this protein is tRNA pseudouridine synthase A.